Reading from the N-terminus, the 224-residue chain is Paired immunoglobulin-like type 2 receptor beta (224 aa).

An N-terminal signal peptide occupies residues 1–28; it reads MALLISLPGGTPAMAQVLLLLSSGCLHA. The Extracellular segment spans residues 29–195; the sequence is GNSERYNRKN…NPSLMNLGAM (167 aa). 3 N-linked (GlcNAc...) asparagine glycosylation sites follow: Asn90, Asn107, and Asn154. A helical transmembrane segment spans residues 196-216; the sequence is VTMLLAKVLVIVLVYGWMIFL. Topologically, residues 217-224 are cytoplasmic; the sequence is RWKQRPAH.

As to quaternary structure, interacts with CD99. Probably associates with DAP12. In terms of tissue distribution, widely expressed with highest levels in spleen, liver and lung. Predominantly expressed by natural killer cells, macrophages, and granulocytes and dendritic cells (BM-DC).

Its subcellular location is the membrane. In terms of biological role, paired receptors consist of highly related activating and inhibitory receptors and are widely involved in the regulation of the immune system. PILRB is thought to act as a cellular signaling activating receptor that associates with ITAM-bearing adapter molecules on the cell surface. Seems to associate with DAP12 and is a receptor for CD99. May be involved in target cell recognition by natural killer cells and in activation of dendritic cells. This is Paired immunoglobulin-like type 2 receptor beta (Pilrb) from Mus musculus (Mouse).